The chain runs to 226 residues: UPF0177 protein YbdJ (226 aa).

Transmembrane regions (helical) follow at residues 16–36 (LLLLLVTVILYNGWTPHLGIF), 43–63 (FAFNYYGFVDILTFLVIIVIA), 81–101 (LLFILFFIVGGNIFIALAHHL), 169–189 (FAWVHTGFTYSFFLYLPISLV), and 206–226 (LHSSINLINTYLPNLLSFWVF).

The protein belongs to the UPF0177 family.

Its subcellular location is the cell membrane. This chain is UPF0177 protein YbdJ (ybdJ), found in Lactococcus lactis subsp. lactis (strain IL1403) (Streptococcus lactis).